Consider the following 244-residue polypeptide: tRNA (guanine-N(7)-)-methyltransferase (244 aa).

The S-adenosyl-L-methionine site is built by Glu-74, Glu-99, Asp-126, and Asp-149. Residue Asp-149 is part of the active site. Residues Lys-153, Asp-185, and 222–225 (TKFE) each bind substrate.

The protein belongs to the class I-like SAM-binding methyltransferase superfamily. TrmB family.

It catalyses the reaction guanosine(46) in tRNA + S-adenosyl-L-methionine = N(7)-methylguanosine(46) in tRNA + S-adenosyl-L-homocysteine. Its pathway is tRNA modification; N(7)-methylguanine-tRNA biosynthesis. In terms of biological role, catalyzes the formation of N(7)-methylguanine at position 46 (m7G46) in tRNA. The sequence is that of tRNA (guanine-N(7)-)-methyltransferase from Colwellia psychrerythraea (strain 34H / ATCC BAA-681) (Vibrio psychroerythus).